Consider the following 184-residue polypeptide: ATP-dependent protease subunit HslV (184 aa).

Residue Thr12 is part of the active site. Residues Ala166, Cys169, and Thr172 each contribute to the Na(+) site.

This sequence belongs to the peptidase T1B family. HslV subfamily. As to quaternary structure, a double ring-shaped homohexamer of HslV is capped on each side by a ring-shaped HslU homohexamer. The assembly of the HslU/HslV complex is dependent on binding of ATP.

It is found in the cytoplasm. It catalyses the reaction ATP-dependent cleavage of peptide bonds with broad specificity.. With respect to regulation, allosterically activated by HslU binding. Its function is as follows. Protease subunit of a proteasome-like degradation complex believed to be a general protein degrading machinery. The chain is ATP-dependent protease subunit HslV from Brucella canis (strain ATCC 23365 / NCTC 10854 / RM-666).